Here is a 380-residue protein sequence, read N- to C-terminus: Probable protein phosphatase 2C 2 (380 aa).

Residues 122 to 376 (GYSVYCKRGK…DDISVMLIQL (255 aa)) enclose the PPM-type phosphatase domain. 4 residues coordinate Mn(2+): D158, G159, D321, and D367.

The protein belongs to the PP2C family. Mg(2+) is required as a cofactor. Mn(2+) serves as cofactor.

The catalysed reaction is O-phospho-L-seryl-[protein] + H2O = L-seryl-[protein] + phosphate. It catalyses the reaction O-phospho-L-threonyl-[protein] + H2O = L-threonyl-[protein] + phosphate. This chain is Probable protein phosphatase 2C 2, found in Arabidopsis thaliana (Mouse-ear cress).